The primary structure comprises 257 residues: MDRIIEKLESGWWIVSHEQKLWLPYGELPHGLAANFDLVGQRALRIGEWQGEPVWLVLQHRRHDMGSVRQVIDQDAGLFQLAGRGVQLAEFYRSHKFCGYCGHPMHPSKTEWAMLCSHCRERYYPQIAPCIIVAIRREDSILLARHVRHRNGVHTVLAGFVEVGETLEQAVAREVMEESGIKVKNLRYVTSQPWPFPQSLMTAFMAEYDSGEIVIDPKELLEANWYRYDDLPLLPPPGTVARRLIEDTVAMCRAEYD.

R69 lines the substrate pocket. Zn(2+)-binding residues include C98 and C101. E111 lines the substrate pocket. Zn(2+)-binding residues include C116 and C119. Position 124 (Y124) interacts with substrate. The Nudix hydrolase domain occupies 125–248 (PQIAPCIIVA…TVARRLIEDT (124 aa)). A divalent metal cation-binding residues include A158, E174, and E178. The short motif at 159 to 180 (GFVEVGETLEQAVAREVMEESG) is the Nudix box element. Substrate is bound at residue 192-199 (QPWPFPQS). A divalent metal cation is bound at residue E219. A241 is a substrate binding site.

This sequence belongs to the Nudix hydrolase family. NudC subfamily. As to quaternary structure, homodimer. It depends on Mg(2+) as a cofactor. Mn(2+) serves as cofactor. The cofactor is Zn(2+).

It catalyses the reaction a 5'-end NAD(+)-phospho-ribonucleoside in mRNA + H2O = a 5'-end phospho-adenosine-phospho-ribonucleoside in mRNA + beta-nicotinamide D-ribonucleotide + 2 H(+). The enzyme catalyses NAD(+) + H2O = beta-nicotinamide D-ribonucleotide + AMP + 2 H(+). The catalysed reaction is NADH + H2O = reduced beta-nicotinamide D-ribonucleotide + AMP + 2 H(+). In terms of biological role, mRNA decapping enzyme that specifically removes the nicotinamide adenine dinucleotide (NAD) cap from a subset of mRNAs by hydrolyzing the diphosphate linkage to produce nicotinamide mononucleotide (NMN) and 5' monophosphate mRNA. The NAD-cap is present at the 5'-end of some mRNAs and stabilizes RNA against 5'-processing. Has preference for mRNAs with a 5'-end purine. Catalyzes the hydrolysis of a broad range of dinucleotide pyrophosphates. The sequence is that of NAD-capped RNA hydrolase NudC from Salmonella heidelberg (strain SL476).